The following is a 1010-amino-acid chain: Protein translocase subunit SecA (1010 aa).

ATP contacts are provided by residues Q86, 104–108, and D535; that span reads GEGKT. The span at 893 to 904 shows a compositional bias: low complexity; that stretch reads QAGAADGNAKGA. Positions 893–916 are disordered; sequence QAGAADGNAKGARTVRHSVRLPGR. Positions 920, 922, 931, and 932 each coordinate Zn(2+). The span at 950-981 shows a compositional bias: low complexity; that stretch reads QHAAVAADTPAQPAPQATATRPPTSQVPRGRA. A disordered region spans residues 950-1010; it reads QHAAVAADTP…RGKGASARKK (61 aa).

Belongs to the SecA family. Monomer and homodimer. Part of the essential Sec protein translocation apparatus which comprises SecA, SecYEG and auxiliary proteins SecDF. Other proteins may also be involved. Zn(2+) is required as a cofactor.

It is found in the cell membrane. The protein resides in the cytoplasm. The catalysed reaction is ATP + H2O + cellular proteinSide 1 = ADP + phosphate + cellular proteinSide 2.. In terms of biological role, part of the Sec protein translocase complex. Interacts with the SecYEG preprotein conducting channel. Has a central role in coupling the hydrolysis of ATP to the transfer of proteins into and across the cell membrane, serving as an ATP-driven molecular motor driving the stepwise translocation of polypeptide chains across the membrane. This chain is Protein translocase subunit SecA, found in Roseiflexus sp. (strain RS-1).